The sequence spans 880 residues: Alanine--tRNA ligase (880 aa).

Zn(2+) contacts are provided by histidine 566, histidine 570, cysteine 668, and histidine 672.

It belongs to the class-II aminoacyl-tRNA synthetase family. It depends on Zn(2+) as a cofactor.

The protein resides in the cytoplasm. It catalyses the reaction tRNA(Ala) + L-alanine + ATP = L-alanyl-tRNA(Ala) + AMP + diphosphate. In terms of biological role, catalyzes the attachment of alanine to tRNA(Ala) in a two-step reaction: alanine is first activated by ATP to form Ala-AMP and then transferred to the acceptor end of tRNA(Ala). Also edits incorrectly charged Ser-tRNA(Ala) and Gly-tRNA(Ala) via its editing domain. This Nostoc sp. (strain PCC 7120 / SAG 25.82 / UTEX 2576) protein is Alanine--tRNA ligase.